Here is a 218-residue protein sequence, read N- to C-terminus: Large ribosomal subunit protein uL3 (218 aa).

Disordered stretches follow at residues Phe-128 to Gly-167 and Ser-199 to Lys-218.

Belongs to the universal ribosomal protein uL3 family. Part of the 50S ribosomal subunit. Forms a cluster with proteins L14 and L19.

In terms of biological role, one of the primary rRNA binding proteins, it binds directly near the 3'-end of the 23S rRNA, where it nucleates assembly of the 50S subunit. The sequence is that of Large ribosomal subunit protein uL3 from Prochlorococcus marinus (strain NATL2A).